Consider the following 524-residue polypeptide: 11-oxo-beta-amyrin 30-oxidase (524 aa).

The helical transmembrane segment at 9–29 (GTTVIISVLSVLLAVIPWYLL) threads the bilayer. Position 472 (cysteine 472) interacts with heme.

This sequence belongs to the cytochrome P450 family. The cofactor is heme. Expressed in flowers. Detected in roots upon salt treatment.

The protein resides in the membrane. It carries out the reaction 11-oxo-beta-amyrin + 3 reduced [NADPH--hemoprotein reductase] + 3 O2 = glycyrrhetinate + 3 oxidized [NADPH--hemoprotein reductase] + 4 H2O + 4 H(+). Functionally, involved in the biosynthesis of triterpenoid saponins. Catalyzes three sequential oxidation steps at C-30 of 11-oxo-beta-amyrin. Also able to catalyze sequential C-30 hydroxylation of beta-amyrin to produce 30-hydroxy-beta-amyrin and 11-deoxoglycyrrhetinic acid. The sequence is that of 11-oxo-beta-amyrin 30-oxidase (CYP72A63) from Medicago truncatula (Barrel medic).